The following is an 850-amino-acid chain: Receptor-like protein kinase ANXUR1 (850 aa).

An N-terminal signal peptide occupies residues 1-26; sequence MSGKTRILFFLTCLSFLLVFPTRSNG. Topologically, residues 27–429 are extracellular; it reads QDLALSCGTS…KKEFKNEKRH (403 aa). N-linked (GlcNAc...) asparagine glycosylation is found at asparagine 114, asparagine 132, asparagine 292, asparagine 302, and asparagine 330. The chain crosses the membrane as a helical span at residues 430-450; the sequence is AFIIGSAGGVLAVLIGALCFT. The Cytoplasmic portion of the chain corresponds to 451 to 850; the sequence is AYKKKQGYQG…FSQIVNPKGR (400 aa). One can recognise a Protein kinase domain in the interval 517-790; the sequence is FDDSNVIGVG…GDVLWNLEFA (274 aa). ATP is bound by residues 523–531 and lysine 545; that span reads IGVGGFGKV. Aspartate 641 (proton acceptor) is an active-site residue. The segment at 796–850 is disordered; it reads TADGTRHRTPNNGGSSEDLGRGGMAVNVAGRDDVSDLSSEDNTEIFSQIVNPKGR. Residues 839–850 are compositionally biased toward polar residues; it reads EIFSQIVNPKGR.

Belongs to the protein kinase superfamily. Ser/Thr protein kinase family. In terms of tissue distribution, expressed in pollen, but not in pistils or seedlings.

It is found in the cell membrane. The enzyme catalyses L-seryl-[protein] + ATP = O-phospho-L-seryl-[protein] + ADP + H(+). It carries out the reaction L-threonyl-[protein] + ATP = O-phospho-L-threonyl-[protein] + ADP + H(+). Its function is as follows. Receptor-like protein kinase that controls pollen tube behavior by directing rupture at proper timing to release the sperm cell. This Arabidopsis thaliana (Mouse-ear cress) protein is Receptor-like protein kinase ANXUR1 (ANX1).